Here is a 274-residue protein sequence, read N- to C-terminus: 3-methyl-2-oxobutanoate hydroxymethyltransferase (274 aa).

Asp50 and Asp89 together coordinate Mg(2+). 3-methyl-2-oxobutanoate contacts are provided by residues 50–51 (DS), Asp89, and Lys119. Glu121 is a Mg(2+) binding site. Catalysis depends on Glu188, which acts as the Proton acceptor.

Belongs to the PanB family. As to quaternary structure, homodecamer; pentamer of dimers. The cofactor is Mg(2+).

The protein localises to the cytoplasm. It carries out the reaction 3-methyl-2-oxobutanoate + (6R)-5,10-methylene-5,6,7,8-tetrahydrofolate + H2O = 2-dehydropantoate + (6S)-5,6,7,8-tetrahydrofolate. Its pathway is cofactor biosynthesis; (R)-pantothenate biosynthesis; (R)-pantoate from 3-methyl-2-oxobutanoate: step 1/2. Functionally, catalyzes the reversible reaction in which hydroxymethyl group from 5,10-methylenetetrahydrofolate is transferred onto alpha-ketoisovalerate to form ketopantoate. This is 3-methyl-2-oxobutanoate hydroxymethyltransferase from Methylorubrum extorquens (strain PA1) (Methylobacterium extorquens).